Consider the following 214-residue polypeptide: Adenylate kinase (214 aa).

Residue 10-15 (GAGKGT) coordinates ATP. Positions 30-59 (STGDMLRAAIKAGTELGKQAKTLMDAGQLV) are NMP. Residues Thr31, Arg36, 57-59 (QLV), 85-88 (GFPR), and Gln92 contribute to the AMP site. The segment at 122–159 (GRRVHPASGRSYHVVYNPPKVEGKDDVTGEDLIIRADD) is LID. Residues Arg123 and 132–133 (SY) each bind ATP. Positions 156 and 167 each coordinate AMP. Residue Gln200 participates in ATP binding.

This sequence belongs to the adenylate kinase family. As to quaternary structure, monomer.

The protein localises to the cytoplasm. The catalysed reaction is AMP + ATP = 2 ADP. The protein operates within purine metabolism; AMP biosynthesis via salvage pathway; AMP from ADP: step 1/1. Catalyzes the reversible transfer of the terminal phosphate group between ATP and AMP. Plays an important role in cellular energy homeostasis and in adenine nucleotide metabolism. The chain is Adenylate kinase from Actinobacillus succinogenes (strain ATCC 55618 / DSM 22257 / CCUG 43843 / 130Z).